Here is a 693-residue protein sequence, read N- to C-terminus: Testis-specific Y-encoded-like protein 2 (693 aa).

Disordered stretches follow at residues 1-56 (MDRP…EAAQ) and 104-125 (GYGE…EASG). Residue K11 forms a Glycyl lysine isopeptide (Lys-Gly) (interchain with G-Cter in SUMO2) linkage. Phosphoserine is present on residues S18 and S20. The segment covering 23-44 (RDPPPPPPPPPLLRLPLPPPQQ) has biased composition (pro residues). Glycyl lysine isopeptide (Lys-Gly) (interchain with G-Cter in SUMO2) cross-links involve residues K163 and K165. Residues 175 to 207 (EDEDERESMRSSRRRRRRRRRKQRKVKRESRER) form a disordered region. The segment covering 185–202 (SSRRRRRRRRRKQRKVKR) has biased composition (basic residues). The residue at position 340 (T340) is a Phosphothreonine. Disordered regions lie at residues 474 to 605 (ENIC…DIEY) and 627 to 693 (ISDE…GKTG). Polar residues predominate over residues 487–496 (VPNNETTDNN). Residues 509–519 (ESADDNNENPE) are compositionally biased toward acidic residues. The segment covering 531–542 (NPNNNENTYGNN) has biased composition (low complexity). Acidic residues-rich tracts occupy residues 559 to 602 (SDSD…DDRD) and 627 to 675 (ISDE…DLED). Phosphoserine occurs at positions 658, 668, and 671.

It belongs to the nucleosome assembly protein (NAP) family. As to quaternary structure, interacts with histones. Interacts with CASK. Part of a complex containing CASK, TBR1 and TSPYL2. In terms of processing, phosphorylation at Ser-20 and/or Thr-340 impairs function on cell proliferation. Ubiquitously expressed, with highest levels in brain, testis and heart, and lowest levels in liver and pancreas.

The protein localises to the nucleus. Its subcellular location is the cytoplasm. Its function is as follows. Part of the CASK/TBR1/TSPYL2 transcriptional complex which modulates gene expression in response to neuronal synaptic activity, probably by facilitating nucleosome assembly. May inhibit cell proliferation by inducing p53-dependent CDKN1A expression. This is Testis-specific Y-encoded-like protein 2 (TSPYL2) from Homo sapiens (Human).